A 347-amino-acid chain; its full sequence is Ribosomal RNA small subunit methyltransferase C (347 aa).

This sequence belongs to the methyltransferase superfamily. RsmC family. Monomer.

The protein localises to the cytoplasm. The catalysed reaction is guanosine(1207) in 16S rRNA + S-adenosyl-L-methionine = N(2)-methylguanosine(1207) in 16S rRNA + S-adenosyl-L-homocysteine + H(+). Its function is as follows. Specifically methylates the guanine in position 1207 of 16S rRNA in the 30S particle. This chain is Ribosomal RNA small subunit methyltransferase C, found in Yersinia pseudotuberculosis serotype O:1b (strain IP 31758).